Consider the following 352-residue polypeptide: C-C chemokine receptor type 5 (352 aa).

Residues 1–30 (MDYEVSSPIYDIDYGASEPCQKIDVKQMGA) are Extracellular-facing. Y3 is subject to Sulfotyrosine. O-linked (GalNAc...) serine glycans are attached at residues S6 and S7. Y10 and Y14 each carry sulfotyrosine. 2 disulfide bridges follow: C20–C269 and C101–C178. A helical transmembrane segment spans residues 31-58 (QLLPPLYSMVFLFGFVGNMLVVLILINC). Residues 59–68 (KRLKSMTDIY) lie on the Cytoplasmic side of the membrane. Residues 69 to 89 (LLNLAISDLFFLFTVPFWAHY) form a helical membrane-spanning segment. At 90-102 (AAGQWDFGNTMCQ) the chain is on the extracellular side. Residues 103-124 (FLTGLYFIGFFSGIFFIILLTI) form a helical membrane-spanning segment. Over 125–141 (DRYLAIVHAVFALKART) the chain is Cytoplasmic. A helical membrane pass occupies residues 142 to 166 (VTFGVVTSVITWVVAVFASLPGIIF). Residues 167 to 198 (TRSQKEGYHYTCSPHFPFGQYRFWKNLETLKM) are Extracellular-facing. A helical membrane pass occupies residues 199–218 (VILGLVLPLLVMVICYSGIL). Topologically, residues 219–235 (KTLLRCRNEKKRHRAVR) are cytoplasmic. Residues 236-260 (LIFTIMIVYFLFWAPYNIVLLLNTY) form a helical membrane-spanning segment. Topologically, residues 261-277 (QEFFGLNNCSSSNRLDQ) are extracellular. The helical transmembrane segment at 278–301 (AMQVTETLGMTHCCVNPIIYAFVG) threads the bilayer. The Cytoplasmic portion of the chain corresponds to 302–352 (EKFRNYLLVFFQKHIAKRFCKCCSIFQKEAPERANSVYTRSTGEQEISVGL). Residues C321, C323, and C324 are each lipidated (S-palmitoyl cysteine). 3 positions are modified to phosphoserine; by BARK1: S337, S342, and S349.

The protein belongs to the G-protein coupled receptor 1 family. In terms of assembly, interacts with PRAF2. Efficient ligand binding to CCL3/MIP-1alpha and CCL4/MIP-1beta requires sulfation, O-glycosylation and sialic acid modifications. Glycosylation on Ser-6 is required for efficient binding of CCL4. Interacts with GRK2. Interacts with ARRB1 and ARRB2. Interacts with CNIH4. Interacts with S100A4; this interaction stimulates T-lymphocyte chemotaxis. Sulfated on at least 2 of the N-terminal tyrosines. Sulfation is required for efficient binding of the chemokines, CCL3 and CCL4. In terms of processing, palmitoylation in the C-terminal is important for cell surface expression. Post-translationally, phosphorylation on serine residues in the C-terminal is stimulated by binding CC chemokines especially by APO-RANTES. O-glycosylated, but not N-glycosylated. Ser-6 appears to be the major site even if Ser-7 may be also O-glycosylated. Also sialylated glycans present which contribute to chemokine binding. Ser-17 may also be glycosylated and, if so, with small moieties such as a T-antigen.

The protein resides in the cell membrane. Functionally, receptor for a number of inflammatory CC-chemokines including CCL3/MIP-1-alpha, CCL4/MIP-1-beta and RANTES and subsequently transduces a signal by increasing the intracellular calcium ion level. May play a role in the control of granulocytic lineage proliferation or differentiation. Participates in T-lymphocyte migration to the infection site by acting as a chemotactic receptor. This chain is C-C chemokine receptor type 5 (CCR5), found in Plecturocebus moloch (Dusky titi monkey).